The chain runs to 380 residues: Septin homolog spn4 (380 aa).

In terms of domain architecture, Septin-type G spans 25–298 (NGVAFTLMLC…EQYRQEQMKV (274 aa)). A G1 motif region spans residues 35–42 (GESGLGKT). Residues 35 to 42 (GESGLGKT), T70, G96, 175 to 183 (KADMYTRRD), G231, and R247 contribute to the GTP site. The G3 motif stretch occupies residues 93–96 (DTPG). The segment at 174–177 (AKAD) is G4 motif.

The protein belongs to the TRAFAC class TrmE-Era-EngA-EngB-Septin-like GTPase superfamily. Septin GTPase family. Component of the septin complex composed of two copies of each spn1, spn2, spn3 and spn4.

The protein resides in the cytoplasm. Its subcellular location is the cell cortex. Functionally, plays a role in the cell cycle. Involved in a late stage of septum formation leading to the separation of the daughter cells. This is Septin homolog spn4 (spn4) from Schizosaccharomyces pombe (strain 972 / ATCC 24843) (Fission yeast).